Reading from the N-terminus, the 201-residue chain is dTTP/UTP pyrophosphatase (201 aa).

Aspartate 80 functions as the Proton acceptor in the catalytic mechanism.

Belongs to the Maf family. YhdE subfamily. Requires a divalent metal cation as cofactor.

The protein resides in the cytoplasm. It catalyses the reaction dTTP + H2O = dTMP + diphosphate + H(+). The catalysed reaction is UTP + H2O = UMP + diphosphate + H(+). Nucleoside triphosphate pyrophosphatase that hydrolyzes dTTP and UTP. May have a dual role in cell division arrest and in preventing the incorporation of modified nucleotides into cellular nucleic acids. The polypeptide is dTTP/UTP pyrophosphatase (Novosphingobium aromaticivorans (strain ATCC 700278 / DSM 12444 / CCUG 56034 / CIP 105152 / NBRC 16084 / F199)).